Consider the following 105-residue polypeptide: MAAKIRREDEVIVLTGKDKGKRGKVTKVLVEQGKVIVEGINVKKKHQKPVPALGVAGGIVSKEAAVDVSNVALFNPATGKGDRVGFRFEDGNKVRFFKSNGELVK.

It belongs to the universal ribosomal protein uL24 family. In terms of assembly, part of the 50S ribosomal subunit.

In terms of biological role, one of two assembly initiator proteins, it binds directly to the 5'-end of the 23S rRNA, where it nucleates assembly of the 50S subunit. Functionally, one of the proteins that surrounds the polypeptide exit tunnel on the outside of the subunit. The sequence is that of Large ribosomal subunit protein uL24 from Tolumonas auensis (strain DSM 9187 / NBRC 110442 / TA 4).